The following is a 269-amino-acid chain: Ribosomal RNA small subunit methyltransferase A (269 aa).

S-adenosyl-L-methionine-binding residues include N11, L13, G37, E57, D85, and N104.

This sequence belongs to the class I-like SAM-binding methyltransferase superfamily. rRNA adenine N(6)-methyltransferase family. RsmA subfamily.

It is found in the cytoplasm. The catalysed reaction is adenosine(1518)/adenosine(1519) in 16S rRNA + 4 S-adenosyl-L-methionine = N(6)-dimethyladenosine(1518)/N(6)-dimethyladenosine(1519) in 16S rRNA + 4 S-adenosyl-L-homocysteine + 4 H(+). Functionally, specifically dimethylates two adjacent adenosines (A1518 and A1519) in the loop of a conserved hairpin near the 3'-end of 16S rRNA in the 30S particle. May play a critical role in biogenesis of 30S subunits. This is Ribosomal RNA small subunit methyltransferase A from Campylobacter hominis (strain ATCC BAA-381 / DSM 21671 / CCUG 45161 / LMG 19568 / NCTC 13146 / CH001A).